Here is a 234-residue protein sequence, read N- to C-terminus: Carboxy-S-adenosyl-L-methionine synthase (234 aa).

S-adenosyl-L-methionine contacts are provided by residues Tyr-35, 60 to 62, 109 to 110, Asn-124, and Arg-191; these read GCS and DV.

It belongs to the class I-like SAM-binding methyltransferase superfamily. Cx-SAM synthase family. As to quaternary structure, homodimer.

The catalysed reaction is prephenate + S-adenosyl-L-methionine = carboxy-S-adenosyl-L-methionine + 3-phenylpyruvate + H2O. Catalyzes the conversion of S-adenosyl-L-methionine (SAM) to carboxy-S-adenosyl-L-methionine (Cx-SAM). In Campylobacter curvus (strain 525.92), this protein is Carboxy-S-adenosyl-L-methionine synthase.